Consider the following 559-residue polypeptide: Paxillin (559 aa).

The short motif at 3-15 is the LD motif 1 element; it reads DLDALLADLESTT. Positions 17–139 are disordered; sequence HISKRPVFLT…SPTMTSTSLG (123 aa). The residue at position 31 (Y31) is a Phosphotyrosine. Over residues 45 to 54 the composition is skewed to pro residues; sequence VPPPVPPPPS. The segment covering 79-98 has biased composition (low complexity); it reads QQPQSQSPIYSSSAKSSSAS. The residue at position 118 (Y118) is a Phosphotyrosine; by FAK1. Residues 121–137 show a composition bias toward polar residues; it reads PNKQKSAEPSPTMTSTS. The LD motif 2 signature appears at 144-156; that stretch reads ELDRLLLELNAVQ. 2 disordered regions span residues 158 to 213 and 225 to 262; these read NPPS…GIED and LESSVPSPVPAITVSQGEVSSPQRVNASQQQTRISASS. The LD motif 3 motif lies at 217-229; it reads SVESLLDELESSV. The segment covering 237–262 has biased composition (polar residues); the sequence is TVSQGEVSSPQRVNASQQQTRISASS. Residues 263–282 are required for binding to PARVA and ILK; the sequence is ATRELDELMASLSDFKFMAQ. Short sequence motifs (LD motif) lie at residues 266-277 and 301-313; these read ELDELMASLSDF and QLDTMLGSLQSDL. The segment at 281–301 is disordered; it reads AQGKAGGSSSPPSTTPKPGSQ. 4 LIM zinc-binding domains span residues 326–376, 385–435, 444–494, and 503–553; these read CGAC…CEKD, CYYC…CRKD, CGGC…CEVH, and CSGC…CQNC.

As to quaternary structure, interacts (via LD motif 4) with PARVA/PARVIN and ILK. In terms of processing, phosphorylated on tyrosine residues during integrin-mediated cell adhesion, embryonic development, fibroblast transformation and following stimulation of cells by mitogens.

Its subcellular location is the cytoplasm. It localises to the cytoskeleton. It is found in the cell junction. The protein localises to the focal adhesion. The protein resides in the cell cortex. Functionally, cytoskeletal protein involved in actin-membrane attachment at sites of cell adhesion to the extracellular matrix (focal adhesion). Binds in vitro to vinculin as well as to the SH3 domain of c-SRC and, when tyrosine phosphorylated, to the SH2 domain of v-CRK. The polypeptide is Paxillin (PXN) (Gallus gallus (Chicken)).